The following is a 203-amino-acid chain: Glycerol-3-phosphate acyltransferase (203 aa).

5 helical membrane passes run 12–32 (ATLL…GLIL), 66–86 (TLLL…LWGV), 88–108 (AGIA…WLSF), 118–138 (IGVL…IWLA), and 159–179 (IALY…MTVI).

This sequence belongs to the PlsY family. Probably interacts with PlsX.

It is found in the cell inner membrane. It catalyses the reaction an acyl phosphate + sn-glycerol 3-phosphate = a 1-acyl-sn-glycero-3-phosphate + phosphate. The protein operates within lipid metabolism; phospholipid metabolism. Catalyzes the transfer of an acyl group from acyl-phosphate (acyl-PO(4)) to glycerol-3-phosphate (G3P) to form lysophosphatidic acid (LPA). This enzyme utilizes acyl-phosphate as fatty acyl donor, but not acyl-CoA or acyl-ACP. This chain is Glycerol-3-phosphate acyltransferase, found in Sinorhizobium fredii (strain NBRC 101917 / NGR234).